Reading from the N-terminus, the 244-residue chain is MTSTEAAGTGKAPAIRANPALQTYYESQESYLVYEVVLRGSHHFGFYEKDTYWPFPVGRSLERMEAKLLSALALPSGSQILDAGCGFGPVAISMAKKGMRVTAIDIIDHHVTKARRNVEKAGLPKGQVTVEKMDYQHLESIASESHDDAKAAATGFFRILKPGGRIAFFEAQRSRTSGDYDEGDELAGHLKLVNEYTAMPTNELSREDYFKDLLEDAGFVDVEFTLPPGTREPREHWSYSALKA.

This sequence belongs to the class I-like SAM-binding methyltransferase superfamily. Erg6/SMT family. Requires S-adenosyl-L-methionine as cofactor.

The catalysed reaction is 3-[(2E,4E,8S,10E,12Z)-4,8-dimethyltetradeca-2,4,10,12-tetraenoyl]-4-hydroxy-5-(4-hydroxyphenyl)-1,2-dihydropyridin-2-one = ilicicolin H. It functions in the pathway mycotoxin biosynthesis. Functionally, S-adenosyl-l-methionine-dependent Diels-Alderase; part of the gene cluster that mediates the biosynthesis of ilicicolin H, a 4-hydroxy-2-pyridonealkaloid that has potent and broad antifungal activities by inhibiting the mitochondrial respiration chain. IliD catalyzes the Diels-Alder reaction that converts the acyclic 2-pyridone intermediate to 8-epi-ilicicolin H. The biosynthesis of ilicicolin H starts with formation of the tetramic acid by the hybrid PKS-NRPS synthetase iliA with the partnering trans-enoyl reductase iliB since iliA lacks a designated enoylreductase (ER) domain. The cytochrome P450 monooxygenase iliC then catalyzes the ring expansion of the tetramate to the acyclic 2-pyridone. The pericyclase iliD further converts the acyclic 2-pyridone into 8-epi-ilicicolin H. 8-epi-ilicicolin H might then spontaneously convert to ilicicolin H since ilicicolin H is produced in the absence of the epimerase iliE, in contrast to what was observed for the Talaromyces variabilis ilicolin H biosynthetic pathway. This chain is S-adenosyl-L-methionine-dependent Diels-Alderase iliD, found in Neonectria sp. (strain DH2).